A 264-amino-acid chain; its full sequence is Thymidylate synthase (264 aa).

R21 is a binding site for dUMP. H51 lines the (6R)-5,10-methylene-5,6,7,8-tetrahydrofolate pocket. Residue R126–R127 coordinates dUMP. Residue C146 is the Nucleophile of the active site. Residues R166–D169, N177, and H207–Y209 each bind dUMP. D169 contacts (6R)-5,10-methylene-5,6,7,8-tetrahydrofolate. Residue A263 coordinates (6R)-5,10-methylene-5,6,7,8-tetrahydrofolate.

The protein belongs to the thymidylate synthase family. Bacterial-type ThyA subfamily. Homodimer.

Its subcellular location is the cytoplasm. The catalysed reaction is dUMP + (6R)-5,10-methylene-5,6,7,8-tetrahydrofolate = 7,8-dihydrofolate + dTMP. It participates in pyrimidine metabolism; dTTP biosynthesis. In terms of biological role, catalyzes the reductive methylation of 2'-deoxyuridine-5'-monophosphate (dUMP) to 2'-deoxythymidine-5'-monophosphate (dTMP) while utilizing 5,10-methylenetetrahydrofolate (mTHF) as the methyl donor and reductant in the reaction, yielding dihydrofolate (DHF) as a by-product. This enzymatic reaction provides an intracellular de novo source of dTMP, an essential precursor for DNA biosynthesis. The chain is Thymidylate synthase from Salmonella typhi.